The primary structure comprises 129 residues: Large ribosomal subunit protein bL17 (129 aa).

Belongs to the bacterial ribosomal protein bL17 family. As to quaternary structure, part of the 50S ribosomal subunit. Contacts protein L32.

This Buchnera aphidicola subsp. Baizongia pistaciae (strain Bp) protein is Large ribosomal subunit protein bL17.